The primary structure comprises 185 residues: Protein GrpE (185 aa).

The segment at 1-22 (MTASQEPVDQAPESNEPAPAVP) is disordered.

Belongs to the GrpE family. As to quaternary structure, homodimer.

Its subcellular location is the cytoplasm. In terms of biological role, participates actively in the response to hyperosmotic and heat shock by preventing the aggregation of stress-denatured proteins, in association with DnaK and GrpE. It is the nucleotide exchange factor for DnaK and may function as a thermosensor. Unfolded proteins bind initially to DnaJ; upon interaction with the DnaJ-bound protein, DnaK hydrolyzes its bound ATP, resulting in the formation of a stable complex. GrpE releases ADP from DnaK; ATP binding to DnaK triggers the release of the substrate protein, thus completing the reaction cycle. Several rounds of ATP-dependent interactions between DnaJ, DnaK and GrpE are required for fully efficient folding. This is Protein GrpE from Bordetella petrii (strain ATCC BAA-461 / DSM 12804 / CCUG 43448).